A 405-amino-acid polypeptide reads, in one-letter code: uncharacterized protein (405 aa).

A run of 13 helical transmembrane segments spans residues 19–39 (IVSI…PLAV), 48–68 (MGFS…ATLL), 85–105 (IVVF…LADI), 106–126 (ASAW…ILGI), 129–149 (SFAG…LHIG), 156–176 (GIVT…CYAW), 178–198 (GLQG…LLAL), 224–244 (GMAL…ITLF), 252–272 (GAAF…LLFP), 283–303 (VAMI…TAAM), 309–329 (IGVL…GVVA), 344–364 (TYTV…GLVM), and 366–386 (WAGV…ALLL).

Belongs to the major facilitator superfamily. YhhS family.

The protein localises to the cell inner membrane. This is an uncharacterized protein from Salmonella enteritidis PT4 (strain P125109).